The following is a 345-amino-acid chain: NADPH dehydrogenase (345 aa).

Ser-23 to Cys-26 contacts FMN. Tyr-28 lines the substrate pocket. Residues Ala-60 and Gln-102 each coordinate FMN. Substrate is bound at residue His-164–His-167. FMN contacts are provided by residues Arg-215 and Gly-307–Arg-308.

This sequence belongs to the NADH:flavin oxidoreductase/NADH oxidase family. NamA subfamily. As to quaternary structure, homotetramer. It depends on FMN as a cofactor.

It catalyses the reaction A + NADPH + H(+) = AH2 + NADP(+). Its function is as follows. Catalyzes the reduction of the double bond of an array of alpha,beta-unsaturated aldehydes and ketones. It also reduces the nitro group of nitroester and nitroaromatic compounds. It could have a role in detoxification processes. In Bacillus thuringiensis subsp. konkukian (strain 97-27), this protein is NADPH dehydrogenase.